The following is a 513-amino-acid chain: MTKRALISVSDKTGVTTFAAGLVANGFEIISTGGTRTVLEEAGVPTLAIDDITGFPEMLDGRVKTLHPNIHGGLLAKRGNQAHQKALTEQGIHFIDLVVVNLYPFKETILKPAISEAEAIEMIDIGGPSMLRSAAKNYQDVTAVVDPSDYEQVLSEISSTGTSQLATRKRLAAKVFRHTAAYDALIADYLTTQVGETEPEKQTLTYERKQTLRYGENSHQQATFYQSVVPVSLSIASARQLHGKELSYNNIRDADAALRIASEFTEPTVVAVKHMNPCGIGTGKTILAAYRQAFEADPVSIFGGIVVLNRPVDQATAAEMHQIFLEIIIAPSFEEEALALLSQKKNLRLLTLDFHAQEKKAVELVSVMGGLLIQEQDTVVENDQAWQVVTERQPTPAERDALNFAWKAVKHVKSNAIVLANESQTVGIGAGQMNRIGSVKIAVDQAQAAGKLQGAVLASDAFFPMADSVEYAAQHGIQAIIQPGGSIKDQASIDLANHYGIAMIFTGTRHFKH.

An MGS-like domain is found at 1 to 145 (MTKRALISVS…KNYQDVTAVV (145 aa)).

It belongs to the PurH family.

It carries out the reaction (6R)-10-formyltetrahydrofolate + 5-amino-1-(5-phospho-beta-D-ribosyl)imidazole-4-carboxamide = 5-formamido-1-(5-phospho-D-ribosyl)imidazole-4-carboxamide + (6S)-5,6,7,8-tetrahydrofolate. The catalysed reaction is IMP + H2O = 5-formamido-1-(5-phospho-D-ribosyl)imidazole-4-carboxamide. The protein operates within purine metabolism; IMP biosynthesis via de novo pathway; 5-formamido-1-(5-phospho-D-ribosyl)imidazole-4-carboxamide from 5-amino-1-(5-phospho-D-ribosyl)imidazole-4-carboxamide (10-formyl THF route): step 1/1. It functions in the pathway purine metabolism; IMP biosynthesis via de novo pathway; IMP from 5-formamido-1-(5-phospho-D-ribosyl)imidazole-4-carboxamide: step 1/1. This chain is Bifunctional purine biosynthesis protein PurH, found in Enterococcus faecalis (strain ATCC 700802 / V583).